The chain runs to 102 residues: Cytochrome b (102 aa).

A run of 3 helical transmembrane segments spans residues 1–21 (FGSLLGVCLITQILTGLFLAM), 45–66 (WLIRNIHTNGASLFFICIYMHI), and 81–101 (WNIGVILFLMTMATAFMGYVF). The heme b site is built by H51 and H65.

The protein belongs to the cytochrome b family. In terms of assembly, the cytochrome bc1 complex contains 3 respiratory subunits (MT-CYB, CYC1 and UQCRFS1), 2 core proteins (UQCRC1 and UQCRC2) and probably 6 low-molecular weight proteins. The cofactor is heme b.

The protein resides in the mitochondrion inner membrane. In terms of biological role, component of the ubiquinol-cytochrome c reductase complex (complex III or cytochrome b-c1 complex) that is part of the mitochondrial respiratory chain. The b-c1 complex mediates electron transfer from ubiquinol to cytochrome c. Contributes to the generation of a proton gradient across the mitochondrial membrane that is then used for ATP synthesis. The chain is Cytochrome b (mt-cyb) from Plethodon yonahlossee (Yonahlossee salamander).